Here is a 417-residue protein sequence, read N- to C-terminus: Cobalamin binding intrinsic factor (417 aa).

An N-terminal signal peptide occupies residues 1–18 (MAWLSFYLLNVLWAVAGT). 3 disulfides stabilise this stretch: C26/C246, C103/C288, and C143/C182. D171 serves as a coordination point for cob(II)alamin. S191 carries the phosphoserine modification. N209 carries an N-linked (GlcNAc...) asparagine glycan. Cob(II)alamin contacts are provided by D222 and Q270. N-linked (GlcNAc...) asparagine glycosylation is found at N311 and N330. Residues 365 to 370 (SWGLIV) and 386 to 395 (WEFLSGKTPL) each bind cob(II)alamin. Residue N413 is glycosylated (N-linked (GlcNAc...) asparagine).

It belongs to the eukaryotic cobalamin transport proteins family. As to quaternary structure, interacts with CUBN (via CUB domains). In terms of processing, the N-terminus is blocked. In terms of tissue distribution, gastric mucosa.

The protein resides in the secreted. In terms of biological role, promotes absorption of the essential vitamin cobalamin (Cbl) in the ileum. After interaction with CUBN, the CBLIF-cobalamin complex is internalized via receptor-mediated endocytosis. This is Cobalamin binding intrinsic factor from Rattus norvegicus (Rat).